The chain runs to 664 residues: E3 ubiquitin-protein ligase RNF139 (664 aa).

A2 carries the post-translational modification N-acetylalanine. 12 helical membrane-spanning segments follow: residues 51–71, 85–105, 125–145, 154–174, 178–198, 293–313, 323–343, 356–376, 390–410, 420–440, 469–489, and 495–512; these read IVLQ…VLIL, AFLL…HIDF, SLWM…VTLL, LIIL…PLHI, LVFT…AVKL, GMSA…LAFI, LGFV…LSGL, MCLL…PVLM, FPVL…SYVL, LFAA…SLTV, SIIV…TMMF, and IRAF…YLQA. The segment at 547–586 adopts an RING-type; atypical zinc-finger fold; it reads CAICYHEFTTSARITPCNHYFHALCLRKWLYIQDTCPMCH. Residues 599–610 show a composition bias toward polar residues; sequence SNVSNNNGFTPP. The segment at 599–664 is disordered; sequence SNVSNNNGFT…AAEEFNDDTD (66 aa). Positions 616 to 628 are enriched in basic and acidic residues; sequence EAVREAAAESDRE. Acidic residues predominate over residues 629–639; that stretch reads LNEDDSTDCDD. S634 is modified (phosphoserine). T635 and T663 each carry phosphothreonine.

In terms of assembly, interacts with VHL. Interacts with MHC class I and HM13. Component of SCAP-SREBP complex composed of SREBF2, SCAP and RNF139; the complex hampers the interaction between SCAP and SEC24B, thereby reducing SREBF2 proteolytic processing. Interacts with SREBF2 (via C-terminal domain). Interacts with SCAP; the interaction inhibits the interaction of SCAP with SEC24B and hampering the ER to Golgi transport of the SCAP-SREBP complex. Interacts with SEC24B. Interacts with INSIG1 and INSIG2. Interacts with EIF3F and EIF3H; the interaction leads to protein translation inhibitions in a ubiquitination-dependent manner. Interacts with XBP1; the interaction induces ubiquitination and degradation of XBP1. Interacts with AUP1, AMFR and UBE2G2; interaction with AUP1 facilitates interaction of RNF139 with ubiquitin-conjugating enzyme UBE2G2 and ubiquitin ligase AMFR/gp78, leading to sterol-induced ubiquitination of HMGCR and its subsequent proteasomal degradation. Autoubiquitinated. Ubiquitination is induced by sterol and leads to ist degradation via the ubiquitin-proteasome pathway.

It is found in the endoplasmic reticulum membrane. The catalysed reaction is S-ubiquitinyl-[E2 ubiquitin-conjugating enzyme]-L-cysteine + [acceptor protein]-L-lysine = [E2 ubiquitin-conjugating enzyme]-L-cysteine + N(6)-ubiquitinyl-[acceptor protein]-L-lysine.. It participates in protein modification; protein ubiquitination. E3-ubiquitin ligase; acts as a negative regulator of cell proliferation through mechanisms involving G2/M arrest and cell death. Required for MHC class I ubiquitination in cells expressing the cytomegalovirus protein US2 before dislocation from the endoplasmic reticulum (ER). Affects SREBP processing by hindering the SREBP-SCAP complex translocation from the ER to the Golgi, thereby reducing SREBF2 target gene expression. Involved in the sterol-accelerated degradation of HMGCR. This is achieved through binding to INSIG1 and/or INSIG2 at the ER membrane. In addition, interaction of RNF139 with AUP1 facilitates interaction of RNF139 with ubiquitin-conjugating enzyme UBE2G2 and ubiquitin ligase AMFR, leading to ubiquitination of HMGCR. The ubiquitinated HMGCR is then released from the ER by the complex into the cytosol for subsequent destruction. Required for INSIG1 ubiquitination. May be required for EIF3 complex ubiquitination. The polypeptide is E3 ubiquitin-protein ligase RNF139 (RNF139) (Pongo abelii (Sumatran orangutan)).